Here is an 844-residue protein sequence, read N- to C-terminus: DNA mismatch repair protein MutS (844 aa).

602–609 (GPNMSGKS) contributes to the ATP binding site.

This sequence belongs to the DNA mismatch repair MutS family.

Its function is as follows. This protein is involved in the repair of mismatches in DNA. It is possible that it carries out the mismatch recognition step. This protein has a weak ATPase activity. This is DNA mismatch repair protein MutS from Streptococcus pneumoniae (strain ATCC 700669 / Spain 23F-1).